A 586-amino-acid chain; its full sequence is Solute carrier family 13 member 2 (586 aa).

3 helical membrane-spanning segments follow: residues 13 to 33 (SYLI…IVQT), 53 to 73 (ALPL…MGIM), and 86 to 106 (TNIL…WNLH). Over residues 165 to 175 (DVEEGNSNPSF) the composition is skewed to polar residues. A disordered region spans residues 165–209 (DVEEGNSNPSFELQEASPQKEETKLDNGQAVSVSSEPRAQKTKEH). 9 helical membrane-spanning segments follow: residues 215-235 (GLSL…LTGT), 264-284 (FAFP…QVLF), 319-339 (PMSF…VLWF), 366-386 (GTVA…IPGL), 407-427 (TVND…FALA), 445-465 (PLQH…VAIF), 478-498 (FLPI…YVML), 506-526 (LAFM…FGGL), and 535-555 (GFLL…SWSI).

The protein belongs to the SLC13A/DASS transporter (TC 2.A.47) family. NADC subfamily. As to expression, highly expressed in kidney and small intestine. Not detectable in brain, heart, stomach and skeletal muscle.

The protein localises to the apical cell membrane. It carries out the reaction succinate(out) + 3 Na(+)(out) = succinate(in) + 3 Na(+)(in). The catalysed reaction is fumarate(out) + 3 Na(+)(out) = fumarate(in) + 3 Na(+)(in). It catalyses the reaction 2-oxoglutarate(out) + 3 Na(+)(out) = 2-oxoglutarate(in) + 3 Na(+)(in). Li(+) decreases succinate transport in the presence of Na(+), by competing at one of the three cation binding sites. Functionally, low-affinity sodium-dicarboxylate cotransporter, that mediates the entry of citric acid cycle intermediates, such as succinate, citrate, fumarate and alpha-ketoglutarate (2-oxoglutarate) into the small intestine and renal proximal tubule. Can transport citrate in a Na(+)-dependent manner, recognizing the divalent form of citrate rather than the trivalent form which is normally found in blood. Transports the dicarboxylate into the cell with a probable stoichiometry of 3 Na(+) for 1 divalent dicarboxylate, rendering the process electrogenic. Has a critical role in renal dicarboxylate transport. This chain is Solute carrier family 13 member 2 (Slc13a2), found in Mus musculus (Mouse).